The primary structure comprises 357 residues: N-acetyl-gamma-glutamyl-phosphate reductase (357 aa).

Residue Cys160 is part of the active site.

Belongs to the NAGSA dehydrogenase family. Type 1 subfamily.

It is found in the cytoplasm. The enzyme catalyses N-acetyl-L-glutamate 5-semialdehyde + phosphate + NADP(+) = N-acetyl-L-glutamyl 5-phosphate + NADPH + H(+). It functions in the pathway amino-acid biosynthesis; L-arginine biosynthesis; N(2)-acetyl-L-ornithine from L-glutamate: step 3/4. Catalyzes the NADPH-dependent reduction of N-acetyl-5-glutamyl phosphate to yield N-acetyl-L-glutamate 5-semialdehyde. The protein is N-acetyl-gamma-glutamyl-phosphate reductase of Prochlorococcus marinus (strain MIT 9313).